Here is a 232-residue protein sequence, read N- to C-terminus: MSCSKSVIKEEMLIDLHLEGTFNGHYFEIKGKGKGQPNEGTNTVTLEVTKGGPLPFGWHILCPQFQYGNKAFVHHPDNIHDYLKLSFPEGYTWERSMHFEDGGLCCITNDISLTGNCFYYDIKFTGLNFPPNGPVVQKKTTGWEPSTERLYPRDGVLIGDIHHALTVEGGGHYACDIKTVYRAKKAALKMPGYHYVDTKLVIWNNDKEFMKVEEHEIAVARHHPFYEPKKDK.

A cross-link (2-iminomethyl-5-imidazolinone (Gln-Gly)) is located at residues 66 to 68 (QYG). Tyrosine 67 carries the post-translational modification 2,3-didehydrotyrosine.

It belongs to the GFP family. Contains a chromophore consisting of modified amino acid residues. The chromophore is formed by autocatalytic backbone condensation between Xaa-N and Gly-(N+2), oxidation of Tyr-(N+1) to didehydrotyrosine, and formation of a double bond to the alpha-amino nitrogen of residue Xaa-N. Maturation of the chromophore requires nothing other than molecular oxygen. The precise stereochemistry of the tyrosine has not been determined. In terms of tissue distribution, oral disk.

Its function is as follows. Pigment protein that is green in color. The chain is GFP-like fluorescent chromoprotein dsFP483 from Discosoma striata (Striped mushroom).